A 102-amino-acid chain; its full sequence is Co-chaperonin GroES (102 aa).

It belongs to the GroES chaperonin family. In terms of assembly, heptamer of 7 subunits arranged in a ring. Interacts with the chaperonin GroEL.

It is found in the cytoplasm. In terms of biological role, together with the chaperonin GroEL, plays an essential role in assisting protein folding. The GroEL-GroES system forms a nano-cage that allows encapsulation of the non-native substrate proteins and provides a physical environment optimized to promote and accelerate protein folding. GroES binds to the apical surface of the GroEL ring, thereby capping the opening of the GroEL channel. This chain is Co-chaperonin GroES, found in Chlamydia pneumoniae (Chlamydophila pneumoniae).